Reading from the N-terminus, the 339-residue chain is Annexin A2 (339 aa).

Position 2 is an N-acetylserine (Ser-2). Residues Ser-2–Tyr-24 form an S100A10-binding site region. Position 24 is a phosphotyrosine; by SRC (Tyr-24). Ser-26 carries the phosphoserine; by PKC modification. Annexin repeat units lie at residues Phe-33–Lys-104 and Thr-105–Lys-176. Residue Lys-49 is modified to N6-acetyllysine; alternate. A Glycyl lysine isopeptide (Lys-Gly) (interchain with G-Cter in SUMO1); alternate cross-link involves residue Lys-49. A Glycyl lysine isopeptide (Lys-Gly) (interchain with G-Cter in SUMO2); alternate cross-link involves residue Lys-49. At Lys-152 the chain carries N6-acetyllysine. Position 184 is a phosphoserine (Ser-184). Annexin repeat units lie at residues Glu-189 to Gln-261 and Asn-265 to Gly-336. Tyr-199 carries the post-translational modification Phosphotyrosine. Lys-227 carries the post-translational modification N6-acetyllysine.

Belongs to the annexin family. As to quaternary structure, heterotetramer containing 2 light chains of S100A10/p11 and 2 heavy chains of ANXA2/p36. Interacts with ATP1B1. Interacts with DYSF. Interacts with COCH. Interacts (via repeat Annexin 1) with PCSK9 (via the C-terminal domain); the interaction inhibits the degradation of LDLR. Interacts with CEACAM1 (via the cytoplasmic domain); this interaction is regulated by phosphorylation of CEACAM1. Interacts with APPL2 and APPL1; targets APPL2 to endosomes and acting in parallel to RAB5A. Interacts with S100A4. May interact with UBAP2. Interacts with PLEKHG4B; this interaction is required for PLEKHG4B localization to cell-cell adhesions. Post-translationally, ISGylated.

The protein resides in the secreted. The protein localises to the extracellular space. It is found in the extracellular matrix. It localises to the basement membrane. Its subcellular location is the melanosome. In terms of biological role, calcium-regulated membrane-binding protein whose affinity for calcium is greatly enhanced by anionic phospholipids. It binds two calcium ions with high affinity. May be involved in heat-stress response. Inhibits PCSK9-enhanced LDLR degradation, probably reduces PCSK9 protein levels via a translational mechanism but also competes with LDLR for binding with PCSK9. Binds to endosomes damaged by phagocytosis of particulate wear debris and participates in endosomal membrane stabilization, thereby limiting NLRP3 inflammasome activation. Required for endothelial cell surface plasmin generation and may support fibrinolytic surveillance and neoangiogenesis. In Bos taurus (Bovine), this protein is Annexin A2 (ANXA2).